The primary structure comprises 804 residues: MRALWVLGLCCVLLTFGSVRADDEVDVDGTVEEDLGKSREGSRTDDEVVQREEEAIQLDGLNASQIRELREKSEKFAFQAEVNRMMKLIINSLYKNKEIFLRELISNASDALDKIRLISLTDENALAGNEELTVKIKCDKEKNLLHVTDTGVGMTREELVKNLGTIAKSGTSEFLNKMTEAQEDGQSTSELIGQFGVGFYSAFLVADKVIVTSKHNNDTQHIWESDSNEFSVIADPRGNTLGRGTTITLVLKEEASDYLELDTIKNLVKKYSQFINFPIYVWSSKTETVEEPMEEEEAAKEEKEDSDDEAAVEEEEEEKKPKTKKVEKTVWDWELMNDIKPIWQRPSKEVEDDEYKAFYKSFSKESDDPMAYIHFTAEGEVTFKSILFVPTSAPRGLFDEYGSKKSDYIKLYVRRVFITDDFHDMMPKYLNFVKGVVDSDDLPLNVSRETLQQHKLLKVIRKKLVRKTLDMIKKIADEKYNDTFWKEFGTNIKLGVIEDHSNRTRLAKLLRFQSSHHPSDITSLDQYVERMKEKQDKIYFMAGSSRKEAESSPFVERLLKKGYEVIYLTEPVDEYCIQALPEFDGKRFQNVAKEGVKFDESEKTKESREAIEKEFEPLLNWMKDKALKDKIEKAVVSQRLTESPCALVASQYGWSGNMERIMKAQAYQTGKDISTNYYASQKKTFEINPRHPLIKDMLRRVKEDEDDKTVSDLAVVLFETATLRSGYLLPDTKAYGDRIERMLRLSLNIDPDAKVEEEPEEEPEETTEDTTEDTEQDDEEEMDAGTDDEEQETVKKSTAEKDEL.

Positions 1–21 are cleaved as a signal peptide; sequence MRALWVLGLCCVLLTFGSVRA. The SRT pseudosubstrate motif signature appears at 42–44; that stretch reads SRT. N-linked (GlcNAc...) asparagine glycosylation is present at asparagine 62. Position 64 is a phosphoserine (serine 64). Asparagine 107 carries an N-linked (GlcNAc...) asparagine glycan. Residues asparagine 107, aspartate 149, and asparagine 162 each coordinate ATP. Lysine 168 carries the post-translational modification N6-(2-hydroxyisobutyryl)lysine. A Phosphoserine modification is found at serine 172. Residue phenylalanine 199 participates in ATP binding. Asparagine 217 carries N-linked (GlcNAc...) asparagine glycosylation. Threonine 288 bears the Phosphothreonine; by CK2 mark. Residues 288–323 are disordered; sequence TVEEPMEEEEAAKEEKEDSDDEAAVEEEEEEKKPKT. Over residues 289–317 the composition is skewed to acidic residues; that stretch reads VEEPMEEEEAAKEEKEDSDDEAAVEEEEE. Phosphoserine; by CK2 is present on serine 306. Serine 403 is subject to Phosphoserine. Lysine 404 carries the post-translational modification N6-succinyllysine. Asparagine 445 carries N-linked (GlcNAc...) asparagine glycosylation. Serine 447 bears the Phosphoserine mark. N6-acetyllysine is present on lysine 479. N-linked (GlcNAc...) asparagine glycans are attached at residues asparagine 481 and asparagine 502. N6-succinyllysine is present on lysine 633. Positions 750–804 are disordered; that stretch reads DPDAKVEEEPEEEPEETTEDTTEDTEQDDEEEMDAGTDDEEQETVKKSTAEKDEL. The span at 757–791 shows a compositional bias: acidic residues; it reads EEPEEEPEETTEDTTEDTEQDDEEEMDAGTDDEEQ. 4 positions are modified to phosphothreonine; by CK2: threonine 766, threonine 770, threonine 774, and threonine 786. Over residues 792 to 804 the composition is skewed to basic and acidic residues; the sequence is ETVKKSTAEKDEL. The Prevents secretion from ER signature appears at 801-804; it reads KDEL.

This sequence belongs to the heat shock protein 90 family. In terms of assembly, homodimer; disulfide-linked. Component of an EIF2 complex at least composed of CELF1/CUGBP1, CALR, CALR3, EIF2S1, EIF2S2, HSP90B1 and HSPA5. Part of a large chaperone multiprotein complex comprising DNAJB11, HSP90B1, HSPA5, HYOU, PDIA2, PDIA4, PDIA6, PPIB, SDF2L1, UGGT1 and very small amounts of ERP29, but not, or at very low levels, CALR nor CANX. Interacts with AIMP1; regulates its retention in the endoplasmic reticulum. Hyperglycosylated form interacts with OS9; promoting its degradation by the endoplasmic reticulum associated degradation (ERAD). Interacts with CNPY3. This interaction is disrupted in the presence of ATP. Interacts with TLR4 and TLR9, but not with TLR3. Interacts with MZB1 in a calcium-dependent manner. Interacts with METTL23. Interacts with IL1B; the interaction facilitates cargo translocation into the ERGIC. Interacts with EIF2AK3. Phosphorylated by CK2. In terms of processing, N-glycosylated cotranslationally at Asn-217 by STT3A-containing OST-A complex: this glycosylation is constitutive. In response to various stress, 5 additional facultative sites (Asn-62, Asn-107, Asn-445, Asn-481 and Asn-502) can be glycosylated post-translationally by STT3B-containing OST-B complex, leading to a hyperglycosylated form that is degraded by the ER-associated degradation (ERAD) pathway. In normal conditions, the OST-A complex together with CCDC134 prevent glycosylation at facultative sites during protein folding, thereby preventing hyperglycosylation. Mechanistically, nascent HSP90B1 is tethered during translation to a specialized CCDC134-containing translocon that forms a microenvironment for its folding, in which STT3A associates with the SRT pseudosubstrate motif, and prevents access to facultative glycosylation sites until folding is completed, rendering its facultative sites inaccessible to the OST-B complex. In terms of tissue distribution, detected in heart muscle (at protein level).

The protein resides in the endoplasmic reticulum lumen. It is found in the sarcoplasmic reticulum lumen. Its subcellular location is the melanosome. The catalysed reaction is ATP + H2O = ADP + phosphate + H(+). Its function is as follows. ATP-dependent chaperone involved in the processing of proteins in the endoplasmic reticulum, regulating their transport. Together with MESD, acts as a modulator of the Wnt pathway by promoting the folding of LRP6, a coreceptor of the canonical Wnt pathway. When associated with CNPY3, required for proper folding of Toll-like receptors. Promotes folding and trafficking of TLR4 to the cell surface. May participate in the unfolding of cytosolic leaderless cargos (lacking the secretion signal sequence) such as the interleukin 1/IL-1 to facilitate their translocation into the ERGIC (endoplasmic reticulum-Golgi intermediate compartment) and secretion; the translocation process is mediated by the cargo receptor TMED10. May also function in endoplasmic reticulum associated degradation (ERAD); it is however unclear whether it participates to ERAD or is a target of ERAD. In Canis lupus familiaris (Dog), this protein is Endoplasmin (HSP90B1).